A 1017-amino-acid polypeptide reads, in one-letter code: Formin-binding protein 4 (1017 aa).

Disordered regions lie at residues 1–141 (MGKK…STDI) and 160–202 (PAAP…TSGW). Residue serine 18 is modified to Phosphoserine. Residues 40–69 (DSTAAVPSQPAPSAATTTTTAVTAAAASDD) are compositionally biased toward low complexity. A phosphoserine mark is found at serine 116 and serine 124. The segment covering 130 to 141 (SKETNGNQSTDI) has biased composition (polar residues). At threonine 172 the chain carries Phosphothreonine. Positions 181 to 200 (AATSTLSSSTSNGTDSTQTS) are enriched in low complexity. Positions 214–248 (GIEMGDWQEVWDENTGCYYYWNTQTNEVTWELPQY) constitute a WW 1 domain. Residue lysine 290 is modified to N6-acetyllysine. A Glycyl lysine isopeptide (Lys-Gly) (interchain with G-Cter in SUMO1) cross-link involves residue lysine 301. Residue lysine 335 forms a Glycyl lysine isopeptide (Lys-Gly) (interchain with G-Cter in SUMO2) linkage. Residue lysine 348 forms a Glycyl lysine isopeptide (Lys-Gly) (interchain with G-Cter in SUMO1); alternate linkage. Residue lysine 348 forms a Glycyl lysine isopeptide (Lys-Gly) (interchain with G-Cter in SUMO2); alternate linkage. 4 disordered regions span residues 421-519 (LEEG…TTPK), 621-676 (ESQW…CKES), 706-792 (PLPL…IKRK), and 899-994 (TATI…AERN). Phosphoserine is present on residues serine 427, serine 432, serine 435, serine 438, and serine 442. Residues 428 to 442 (VSGSSPRSDISQPAS) show a composition bias toward polar residues. A compositionally biased stretch (basic residues) spans 449–458 (LMSKRGKWKM). Low complexity predominate over residues 461-474 (RATSPESTSRSSSK). At serine 464 the chain carries Phosphoserine. At threonine 479 the chain carries Phosphothreonine. Basic and acidic residues predominate over residues 491-513 (NSEKIDENSDKEMEVEESPEKIK). Phosphoserine is present on residues serine 499 and serine 508. A phosphothreonine mark is found at threonine 516 and threonine 517. A Glycyl lysine isopeptide (Lys-Gly) (interchain with G-Cter in SUMO1); alternate cross-link involves residue lysine 519. Lysine 519 participates in a covalent cross-link: Glycyl lysine isopeptide (Lys-Gly) (interchain with G-Cter in SUMO2); alternate. The WW 2 domain occupies 595 to 629 (NATPKGWSCHWDRDHRRYFYVNEQSGESQWEFPDG). The span at 627 to 637 (PDGEEEEEESQ) shows a compositional bias: acidic residues. Residues 640–656 (ENRDETLAKQTLKDKTG) are compositionally biased toward basic and acidic residues. The segment covering 657–671 (TDSNSTESSETSTGS) has biased composition (low complexity). The span at 706–732 (PLPLEMPPPPPPPPESPPPPPPPPPPA) shows a compositional bias: pro residues. Over residues 733-748 (EDGEIQEVEMEDEGSE) the composition is skewed to acidic residues. Residues 764–786 (SAQTTVVTSQSSVDSTISSSSST) are compositionally biased toward low complexity. Positions 904 to 925 (EPPPPPPPPPPPPPPAPKMPPP) are enriched in pro residues. Residues 929–941 (KKGRKDKAKKSKT) are compositionally biased toward basic residues. The span at 957–970 (LDEEDNSSSSEEDR) shows a compositional bias: acidic residues. A phosphoserine mark is found at serine 963, serine 964, and serine 965. Over residues 971 to 982 (ESTAQKRIEEWK) the composition is skewed to basic and acidic residues.

Binds FMN1. Interacts with the Arg/Gly-rich-flanked Pro-rich of KHDRBS1/SAM68. Arginine methylation in these regions has no effect on this binding. In terms of tissue distribution, highly expressed in the eye.

This Homo sapiens (Human) protein is Formin-binding protein 4 (FNBP4).